The chain runs to 523 residues: Leucine-rich repeat transmembrane neuronal protein 1 (523 aa).

An N-terminal signal peptide occupies residues Met-1–Ala-34. One can recognise an LRRNT domain in the interval Ala-35–Asn-63. Topologically, residues Ala-35–Lys-428 are extracellular. N-linked (GlcNAc...) asparagine glycosylation is found at Asn-56 and Asn-63. LRR repeat units lie at residues Leu-64–Gly-87, Met-89–Lys-111, Leu-112–Pro-135, Met-136–Gly-159, Arg-161–Asp-183, Cys-184–Gly-207, Phe-209–Arg-231, Ile-233–Val-255, Trp-256–Thr-278, and Pro-280–Ser-302. N-linked (GlcNAc...) asparagine glycosylation occurs at Asn-130. Residues Asn-314–Asp-365 form the LRRCT domain. N-linked (GlcNAc...) asparagine glycosylation occurs at Asn-381. The helical transmembrane segment at Val-429–Val-449 threads the bilayer. Residues Ser-450–Val-523 lie on the Cytoplasmic side of the membrane. Residues Glu-520–Val-523 carry the May be involved in DLG4-binding motif.

It belongs to the LRRTM family. As to quaternary structure, interacts with DLG4.

It localises to the cell membrane. Its subcellular location is the postsynaptic cell membrane. Its function is as follows. Exhibits strong synaptogenic activity, restricted to excitatory presynaptic differentiation, acting at both pre- and postsynaptic level. In Rattus norvegicus (Rat), this protein is Leucine-rich repeat transmembrane neuronal protein 1 (Lrrtm1).